We begin with the raw amino-acid sequence, 173 residues long: Alpha-crystallin A chain (173 aa).

Met-1 carries the post-translational modification N-acetylmethionine. Residues Leu-52–Ser-162 form the sHSP domain. Zn(2+) contacts are provided by His-100, Glu-102, His-107, and His-154. Positions Ser-142–Ser-173 are disordered. Over residues Ser-153–Pro-167 the composition is skewed to basic and acidic residues. Residue Ser-162 is glycosylated (O-linked (GlcNAc) serine).

This sequence belongs to the small heat shock protein (HSP20) family. As to quaternary structure, heteropolymer composed of three CRYAA and one CRYAB subunits. Inter-subunit bridging via zinc ions enhances stability, which is crucial as there is no protein turn over in the lens. Can also form homodimers and homotetramers (dimers of dimers) which serve as the building blocks of homooligomers. Within homooligomers, the zinc-binding motif is created from residues of 3 different molecules. His-100 and Glu-102 from one molecule are ligands of the zinc ion, and His-107 and His-154 residues from additional molecules complete the site with tetrahedral coordination geometry.

It localises to the cytoplasm. The protein resides in the nucleus. Functionally, contributes to the transparency and refractive index of the lens. May act as a chaperone, preventing aggregation of various proteins under a wide range of stress conditions. In Gallus gallus (Chicken), this protein is Alpha-crystallin A chain (CRYAA).